The sequence spans 516 residues: Glycosyl hydrolase family 109 protein 4 (516 aa).

The N-terminal stretch at 1-18 (MKKIKLLLVAGACVVLSA) is a signal peptide. Cys-19 carries N-palmitoyl cysteine lipidation. The S-diacylglycerol cysteine moiety is linked to residue Cys-19. NAD(+) is bound by residues 76–77 (MR), Asp-98, 146–149 (WLHH), 166–167 (EV), and Asn-195. Substrate contacts are provided by residues Tyr-224, Arg-247, 259 to 262 (YATH), and Tyr-337. Position 259 (Tyr-259) interacts with NAD(+).

It belongs to the Gfo/Idh/MocA family. Glycosyl hydrolase 109 subfamily. NAD(+) is required as a cofactor.

The protein localises to the cell membrane. Glycosidase. This is Glycosyl hydrolase family 109 protein 4 from Phocaeicola vulgatus (strain ATCC 8482 / DSM 1447 / JCM 5826 / CCUG 4940 / NBRC 14291 / NCTC 11154) (Bacteroides vulgatus).